Consider the following 351-residue polypeptide: Anthranilate phosphoribosyltransferase (351 aa).

5-phospho-alpha-D-ribose 1-diphosphate contacts are provided by residues Gly80, Gly83 to Asp84, Thr88, Asn90 to Thr93, Lys108 to Ser116, and Ser120. Residue Gly80 coordinates anthranilate. Ser92 is a binding site for Mg(2+). Anthranilate is bound at residue Asn111. Arg166 contacts anthranilate. Mg(2+) contacts are provided by Asp229 and Glu230.

This sequence belongs to the anthranilate phosphoribosyltransferase family. As to quaternary structure, homodimer. Mg(2+) serves as cofactor.

The enzyme catalyses N-(5-phospho-beta-D-ribosyl)anthranilate + diphosphate = 5-phospho-alpha-D-ribose 1-diphosphate + anthranilate. The protein operates within amino-acid biosynthesis; L-tryptophan biosynthesis; L-tryptophan from chorismate: step 2/5. Catalyzes the transfer of the phosphoribosyl group of 5-phosphorylribose-1-pyrophosphate (PRPP) to anthranilate to yield N-(5'-phosphoribosyl)-anthranilate (PRA). In Pelodictyon phaeoclathratiforme (strain DSM 5477 / BU-1), this protein is Anthranilate phosphoribosyltransferase.